Reading from the N-terminus, the 375-residue chain is FK506-binding protein 4 (375 aa).

2 disordered regions span residues 55–78 and 127–265; these read GFED…EEEI and PPDF…SKMT. 2 stretches are compositionally biased toward acidic residues: residues 56–66 and 131–173; these read FEDDYDEEEQE and FDQD…DPDR. The segment covering 196-216 has biased composition (basic and acidic residues); sequence DSKKRAAEKPVKETAAKKLKA. Residues 217–230 are compositionally biased toward low complexity; the sequence is DASAASAASTPTKA. Basic and acidic residues predominate over residues 231 to 261; that stretch reads IETKGEKQTKGAKDTKPKSETVEKKTVDKST. A PPIase FKBP-type domain is found at 289 to 375; sequence GQKVGMRYVG…VFDVKLVEIK (87 aa).

It belongs to the FKBP-type PPIase family. FKBP3/4 subfamily. As to quaternary structure, binds to histones H3 and H4.

It is found in the nucleus. The enzyme catalyses [protein]-peptidylproline (omega=180) = [protein]-peptidylproline (omega=0). With respect to regulation, inhibited by both FK506 and rapamycin. In terms of biological role, PPIase that acts as a histone chaperone. Histone proline isomerase that increases the rate of cis-trans isomerization at prolines on the histone H3 N-terminal tail. Proline isomerization influences H3 methylation thereby regulating gene expression. The sequence is that of FK506-binding protein 4 (FPR4) from Mycosarcoma maydis (Corn smut fungus).